The following is a 170-amino-acid chain: Small ribosomal subunit protein bS18c (170 aa).

Disordered stretches follow at residues 1-59 (MYIS…IGPG) and 151-170 (NLRN…SSDC). 7 consecutive repeats follow at residues 4–10 (SKQPFRK), 11–17 (SKQPFRK), 18–24 (SKQTFHK), 25–31 (SKQPFRK), 32–38 (FKQPFRK), 39–45 (SKQPFRK), and 46–52 (SKQPFRR). A 7 X 7 AA tandem repeats region spans residues 4–52 (SKQPFRKSKQPFRKSKQTFHKSKQPFRKFKQPFRKSKQPFRKSKQPFRR). Basic residues predominate over residues 7–55 (PFRKSKQPFRKSKQTFHKSKQPFRKFKQPFRKSKQPFRKSKQPFRRRSR).

The protein belongs to the bacterial ribosomal protein bS18 family. In terms of assembly, part of the 30S ribosomal subunit.

The protein localises to the plastid. Its subcellular location is the chloroplast. The sequence is that of Small ribosomal subunit protein bS18c (rps18) from Zea mays (Maize).